The following is a 212-amino-acid chain: MIFITGTDTGVGKTFVSKIIGKHLKYKENINTGYLKPIESGGIEDTATLKEALNLDENLNILNPVNLKNPLSPNIAAEIENKPIDLVEIKKSFDLLKNKYDFLIIEGAGGVAVPIKYNSFLMSDLIVYLGAPAIIVSRPDLGTINHTLLTIEHLRNKGILVKGVIINCINELDTVLHYEKTFETINRCGNVEIIGIVKNENEYNINFDKIIG.

10–15 contributes to the ATP binding site; sequence GVGKTF. Threonine 14 is a Mg(2+) binding site. Lysine 36 is a catalytic residue. Residue serine 40 participates in substrate binding. Residues aspartate 45, 106–109, and 167–168 contribute to the ATP site; these read EGAG and NC. Mg(2+) contacts are provided by aspartate 45 and glutamate 106.

This sequence belongs to the dethiobiotin synthetase family. In terms of assembly, homodimer. The cofactor is Mg(2+).

Its subcellular location is the cytoplasm. It catalyses the reaction (7R,8S)-7,8-diammoniononanoate + CO2 + ATP = (4R,5S)-dethiobiotin + ADP + phosphate + 3 H(+). It participates in cofactor biosynthesis; biotin biosynthesis; biotin from 7,8-diaminononanoate: step 1/2. Its function is as follows. Catalyzes a mechanistically unusual reaction, the ATP-dependent insertion of CO2 between the N7 and N8 nitrogen atoms of 7,8-diaminopelargonic acid (DAPA, also called 7,8-diammoniononanoate) to form a ureido ring. This chain is ATP-dependent dethiobiotin synthetase BioD, found in Methanococcus aeolicus (strain ATCC BAA-1280 / DSM 17508 / OCM 812 / Nankai-3).